The sequence spans 312 residues: Photosystem I assembly protein Ycf4 (312 aa).

Transmembrane regions (helical) follow at residues 42–62 (WAFI…SSYF), 91–111 (IILF…GLFL), and 113–133 (FYLW…IYIY).

Belongs to the Ycf4 family.

It localises to the plastid. It is found in the chloroplast thylakoid membrane. Seems to be required for the assembly of the photosystem I complex. This chain is Photosystem I assembly protein Ycf4, found in Pleurastrum terricola (Filamentous green alga).